Reading from the N-terminus, the 118-residue chain is NADPH-dependent 7-cyano-7-deazaguanine reductase (118 aa).

The active-site Thioimide intermediate is the C31. The Proton donor role is filled by D38. Residues 53-55 (IEL) and 72-73 (YE) contribute to the substrate site.

It belongs to the GTP cyclohydrolase I family. QueF type 1 subfamily.

The protein localises to the cytoplasm. The catalysed reaction is 7-aminomethyl-7-carbaguanine + 2 NADP(+) = 7-cyano-7-deazaguanine + 2 NADPH + 3 H(+). The protein operates within tRNA modification; tRNA-queuosine biosynthesis. In terms of biological role, catalyzes the NADPH-dependent reduction of 7-cyano-7-deazaguanine (preQ0) to 7-aminomethyl-7-deazaguanine (preQ1). In Prosthecochloris aestuarii (strain DSM 271 / SK 413), this protein is NADPH-dependent 7-cyano-7-deazaguanine reductase.